We begin with the raw amino-acid sequence, 267 residues long: NAD kinase 2 (267 aa).

Asp-52 (proton acceptor) is an active-site residue. NAD(+) is bound by residues 52–53 (DA), 124–125 (NE), Arg-151, Asp-153, 164–169 (TAYNKS), and Ala-188.

It belongs to the NAD kinase family. It depends on a divalent metal cation as a cofactor.

The protein localises to the cytoplasm. The catalysed reaction is NAD(+) + ATP = ADP + NADP(+) + H(+). Involved in the regulation of the intracellular balance of NAD and NADP, and is a key enzyme in the biosynthesis of NADP. Catalyzes specifically the phosphorylation on 2'-hydroxyl of the adenosine moiety of NAD to yield NADP. The chain is NAD kinase 2 from Bacillus anthracis.